The chain runs to 507 residues: ATP synthase subunit alpha, chloroplastic (507 aa).

170 to 177 (GDRQTGKT) contacts ATP.

Belongs to the ATPase alpha/beta chains family. F-type ATPases have 2 components, CF(1) - the catalytic core - and CF(0) - the membrane proton channel. CF(1) has five subunits: alpha(3), beta(3), gamma(1), delta(1), epsilon(1). CF(0) has four main subunits: a, b, b' and c.

The protein localises to the plastid. The protein resides in the chloroplast thylakoid membrane. The enzyme catalyses ATP + H2O + 4 H(+)(in) = ADP + phosphate + 5 H(+)(out). In terms of biological role, produces ATP from ADP in the presence of a proton gradient across the membrane. The alpha chain is a regulatory subunit. The chain is ATP synthase subunit alpha, chloroplastic from Drimys granadensis.